The chain runs to 131 residues: D-ribose pyranase (131 aa).

H20 serves as the catalytic Proton donor. Substrate contacts are provided by residues D28, H98, and 120–122 (YAN).

The protein belongs to the RbsD / FucU family. RbsD subfamily. As to quaternary structure, homodecamer.

It is found in the cytoplasm. It carries out the reaction beta-D-ribopyranose = beta-D-ribofuranose. The protein operates within carbohydrate metabolism; D-ribose degradation; D-ribose 5-phosphate from beta-D-ribopyranose: step 1/2. Its function is as follows. Catalyzes the interconversion of beta-pyran and beta-furan forms of D-ribose. This chain is D-ribose pyranase, found in Clostridium perfringens (strain SM101 / Type A).